Consider the following 383-residue polypeptide: NifS-like protein (383 aa).

Pyridoxal 5'-phosphate is bound by residues 58-59 (SE) and 184-186 (SIN).

The protein belongs to the class-V pyridoxal-phosphate-dependent aminotransferase family. NifS/IscS subfamily. Pyridoxal 5'-phosphate is required as a cofactor.

It is found in the virion. This chain is NifS-like protein, found in African swine fever virus (strain Badajoz 1971 Vero-adapted) (Ba71V).